The following is a 199-amino-acid chain: Superoxide dismutase [Mn] 2 (199 aa).

Residues His-28, His-75, Asp-157, and His-161 each contribute to the Mn(2+) site.

Belongs to the iron/manganese superoxide dismutase family. The cofactor is Mn(2+).

It catalyses the reaction 2 superoxide + 2 H(+) = H2O2 + O2. Functionally, destroys superoxide anion radicals which are normally produced within the cells and which are toxic to biological systems. The polypeptide is Superoxide dismutase [Mn] 2 (sod2) (Haloferax volcanii (strain ATCC 29605 / DSM 3757 / JCM 8879 / NBRC 14742 / NCIMB 2012 / VKM B-1768 / DS2) (Halobacterium volcanii)).